The sequence spans 152 residues: Lipoprotein signal peptidase (152 aa).

The next 2 membrane-spanning stretches (helical) occupy residues 55–75 (NKMW…VFYM) and 85–105 (LGIS…DRVF). Residues D111 and D129 contribute to the active site. A helical transmembrane segment spans residues 124-144 (VFNIADSALCIGVVLIIIQTL).

Belongs to the peptidase A8 family.

Its subcellular location is the cell membrane. The enzyme catalyses Release of signal peptides from bacterial membrane prolipoproteins. Hydrolyzes -Xaa-Yaa-Zaa-|-(S,diacylglyceryl)Cys-, in which Xaa is hydrophobic (preferably Leu), and Yaa (Ala or Ser) and Zaa (Gly or Ala) have small, neutral side chains.. The protein operates within protein modification; lipoprotein biosynthesis (signal peptide cleavage). This protein specifically catalyzes the removal of signal peptides from prolipoproteins. This Bacillus cytotoxicus (strain DSM 22905 / CIP 110041 / 391-98 / NVH 391-98) protein is Lipoprotein signal peptidase.